Here is a 314-residue protein sequence, read N- to C-terminus: Serine/threonine-protein phosphatase CPPED1 (314 aa).

Residue S2 is modified to Phosphoserine. The interval 47-250 (KAWSTGDCDN…KVVFSGHYHR (204 aa)) is catalytic. A divalent metal cation-binding residues include D53, D90, N127, and H247. A Phosphoserine modification is found at S294.

It belongs to the metallophosphoesterase superfamily. CPPED1 family. It depends on a divalent metal cation as a cofactor.

The protein resides in the cytoplasm. It carries out the reaction O-phospho-L-seryl-[protein] + H2O = L-seryl-[protein] + phosphate. The catalysed reaction is O-phospho-L-threonyl-[protein] + H2O = L-threonyl-[protein] + phosphate. In terms of biological role, protein phosphatase that dephosphorylates AKT family kinase specifically at 'Ser-473', blocking cell cycle progression and promoting cell apoptosis. May play an inhibitory role in glucose uptake by adipocytes. This Pongo abelii (Sumatran orangutan) protein is Serine/threonine-protein phosphatase CPPED1 (CPPED1).